Here is a 294-residue protein sequence, read N- to C-terminus: Tyrosine recombinase XerC (294 aa).

The Core-binding (CB) domain maps to 1–85 (MSRLVEDFFA…ACRGFYTWLV (85 aa)). A Tyr recombinase domain is found at 106 to 283 (KLPRILDADE…DFQYLSKVYD (178 aa)). Active-site residues include arginine 145, lysine 169, histidine 235, arginine 238, and histidine 261. The active-site O-(3'-phospho-DNA)-tyrosine intermediate is the tyrosine 270.

Belongs to the 'phage' integrase family. XerC subfamily. As to quaternary structure, forms a cyclic heterotetrameric complex composed of two molecules of XerC and two molecules of XerD.

It is found in the cytoplasm. Its function is as follows. Site-specific tyrosine recombinase, which acts by catalyzing the cutting and rejoining of the recombining DNA molecules. The XerC-XerD complex is essential to convert dimers of the bacterial chromosome into monomers to permit their segregation at cell division. It also contributes to the segregational stability of plasmids. The chain is Tyrosine recombinase XerC from Xylella fastidiosa (strain M23).